The following is a 221-amino-acid chain: Orotate phosphoribosyltransferase (221 aa).

5-phospho-alpha-D-ribose 1-diphosphate is bound at residue K27. F35–F36 contacts orotate. Residues Y75–K76, R102, K103, K106, H108, and D128–A136 contribute to the 5-phospho-alpha-D-ribose 1-diphosphate site. T132 and R160 together coordinate orotate.

It belongs to the purine/pyrimidine phosphoribosyltransferase family. PyrE subfamily. As to quaternary structure, homodimer. Mg(2+) is required as a cofactor.

The catalysed reaction is orotidine 5'-phosphate + diphosphate = orotate + 5-phospho-alpha-D-ribose 1-diphosphate. The protein operates within pyrimidine metabolism; UMP biosynthesis via de novo pathway; UMP from orotate: step 1/2. In terms of biological role, catalyzes the transfer of a ribosyl phosphate group from 5-phosphoribose 1-diphosphate to orotate, leading to the formation of orotidine monophosphate (OMP). This Dichelobacter nodosus (strain VCS1703A) protein is Orotate phosphoribosyltransferase.